The chain runs to 988 residues: MIRLVFLFLLVVLSVELLDFRSNNYRQIINNALPTIDPQMISQAQAAINPYTDIFVNPPNSFVDFPMANIASSGAFWQQPQSTVSQVAWNPPVSTNPSSSPAASTISFQSYQNPSTFPSTTTASTTTSTTTMPPTYQTTTKSVKKNTETLWTTSKSPMKLSKNPKPSKLNQKSSKSSATSFDSAQLSVLSHRLLNDVLIIPSSRRLYILAIIPIHQSSGQQNFECGEIDVNAIVRMAAFLEAQKTINESNLLKEIGVDIGAIIVDSCSTDLRSVADLYELLSGTNIQKSDLIAIIRDDSTFMPNTEQIIRQLNLPVVNTFFTTRSAVQTSGTLPSMFLPIQSIISALRHYQSTCVNIIFDEKYSESVSEFQQVALTEGICVEVAIHVKNASSTVSEMVVRRLLLSEARIVVALLSEDTWIQMTKALRSEMVIAGRFVFISMQDQRWTTSRKFIESWPTFEQHLISITPKTPINHEEEIKKLTENIPKLSLPNLWLKQFWSSAFKCHVDNEDMGGSNSFSRECATTQSLNISQVAPDVDVASISLATHAIGIAFRSFVDRVCPGALVISLSDCVNDPFVGFHQSILDSDFVHHLSDIPVSFNYSTGFRDISLRINRVQFVEDRLQFSELGIVDPIQFTYQDSSDTATPSARGSYLLMSSTCPKSTCAKELAKSTIKQQLPSIVKALTDLEIMIFTIFSVLSALTCLMCMYLKVISVSEYRNLTAVTFLGLAFLSISAPAFIIPPNSISCSLRKLLFPIAISITIAPVFVKTVLIWKSIGSSSSSVLIAFCIVLIQTVISTEWLLLASDSATEFVSTLHGTMWRCSPGDSSEEMILLSCSLIALLSLLSFIFALATLKHSQSLQHLMISILAILFETALYVSLPLIPYKTRDTVMATTILIFAFVALLLSHTGKSSAKKESECGGTLQKTNENWLQHVVQSPQDQMTLVKNYHTASTHAQSTMQFEKRSEDTLRRNTSLYGTEGYELPTP.

A signal peptide spans 1 to 17 (MIRLVFLFLLVVLSVEL). The disordered stretch occupies residues 111-176 (YQNPSTFPST…SKLNQKSSKS (66 aa)). Low complexity predominate over residues 114–140 (PSTFPSTTTASTTTSTTTMPPTYQTTT). Residues Asn247, Asn389, Asn529, and Asn601 are each glycosylated (N-linked (GlcNAc...) asparagine). Residues 690 to 710 (IMIFTIFSVLSALTCLMCMYL) form a helical membrane-spanning segment. Asn720 carries an N-linked (GlcNAc...) asparagine glycan. The next 6 membrane-spanning stretches (helical) occupy residues 721 to 741 (LTAVTFLGLAFLSISAPAFII), 753 to 773 (LLFPIAISITIAPVFVKTVLI), 784 to 804 (VLIAFCIVLIQTVISTEWLLL), 832 to 852 (MILLSCSLIALLSLLSFIFAL), 864 to 884 (LMISILAILFETALYVSLPLI), and 891 to 911 (TVMATTILIFAFVALLLSHTG). Residues 966–988 (RSEDTLRRNTSLYGTEGYELPTP) are disordered. Asn974 is a glycosylation site (N-linked (GlcNAc...) asparagine).

The protein localises to the membrane. This is an uncharacterized protein from Caenorhabditis elegans.